Here is a 166-residue protein sequence, read N- to C-terminus: Apoptosis regulator M11L (166 aa).

Residues 138–160 (SGGCKISVYLTAAVVGFVAYGIL) form a helical membrane-spanning segment.

In terms of assembly, interacts with host BAX; this interaction inhibits apoptosis activation. Interacts with host BAK1.

It is found in the host mitochondrion. Its subcellular location is the host membrane. Plays a role in the inhibition of mitochondria-mediated apoptosis by blocking the activation of mitochondria-tranlocalized BAX thereby maintaining pro-apoptotic BAX in an inactive conformation. Also inhibits apoptosis in a BAX-independent manner by interacting with and inhibiting host BAK1. This Myxoma virus (strain Lausanne) (MYXV) protein is Apoptosis regulator M11L (m011L).